Here is a 205-residue protein sequence, read N- to C-terminus: High frequency lysogenization protein HflD homolog (205 aa).

Belongs to the HflD family.

Its subcellular location is the cytoplasm. The protein resides in the cell inner membrane. The polypeptide is High frequency lysogenization protein HflD homolog (Shewanella baltica (strain OS223)).